Here is a 709-residue protein sequence, read N- to C-terminus: Fatty acid oxidation complex subunit alpha (709 aa).

Residues 1-188 (MEKTFNLTRR…KMGLVNDVVP (188 aa)) form an enoyl-CoA hydratase region. Residues 308-709 (RKVKKAVILG…AMAAEKARFF (402 aa)) form a 3-hydroxyacyl-CoA dehydrogenase region.

It in the N-terminal section; belongs to the enoyl-CoA hydratase/isomerase family. The protein in the central section; belongs to the 3-hydroxyacyl-CoA dehydrogenase family. Heterotetramer of two alpha chains (FadJ) and two beta chains (FadI).

It is found in the cytoplasm. It catalyses the reaction a (3S)-3-hydroxyacyl-CoA = a (2E)-enoyl-CoA + H2O. The enzyme catalyses a 4-saturated-(3S)-3-hydroxyacyl-CoA = a (3E)-enoyl-CoA + H2O. The catalysed reaction is a (3S)-3-hydroxyacyl-CoA + NAD(+) = a 3-oxoacyl-CoA + NADH + H(+). It carries out the reaction (3S)-3-hydroxybutanoyl-CoA = (3R)-3-hydroxybutanoyl-CoA. The protein operates within lipid metabolism; fatty acid beta-oxidation. Functionally, catalyzes the formation of a hydroxyacyl-CoA by addition of water on enoyl-CoA. Also exhibits 3-hydroxyacyl-CoA epimerase and 3-hydroxyacyl-CoA dehydrogenase activities. This is Fatty acid oxidation complex subunit alpha from Shewanella sp. (strain ANA-3).